A 533-amino-acid polypeptide reads, in one-letter code: Sterol 26-hydroxylase, mitochondrial (533 aa).

The N-terminal 32 residues, 1-32, are a transit peptide targeting the mitochondrion; sequence MAVLSRMRLRWALLDTRVMGHGLCPQGARAKA. The disordered stretch occupies residues 38-58; the sequence is LRDHESTEGPGTGQDRPRLRS. Lysine 142 and lysine 375 each carry N6-acetyllysine. The tract at residues 386-400 is sterol-binding; that stretch reads PLLKAVIKETLRLYP. Cysteine 479 contacts heme. N6-acetyllysine is present on residues lysine 512 and lysine 523.

This sequence belongs to the cytochrome P450 family. In terms of assembly, interacts with HSP70; this interaction is required for initial targeting to mitochondria. Heme is required as a cofactor. Expressed in liver, kidney and ovary.

It localises to the mitochondrion inner membrane. It carries out the reaction 5beta-cholestane-3alpha,7alpha,12alpha-triol + 6 reduced [adrenodoxin] + 3 O2 + 5 H(+) = (25R)-3alpha,7alpha,12alpha-trihydroxy-5beta-cholestan-26-oate + 6 oxidized [adrenodoxin] + 4 H2O. The enzyme catalyses cholestanol + 2 reduced [adrenodoxin] + O2 + 2 H(+) = (25R)-26-hydroxycholestanol + 2 oxidized [adrenodoxin] + H2O. It catalyses the reaction (25R)-3beta-hydroxycholest-5-en-7-one-26-al + 2 reduced [adrenodoxin] + O2 + H(+) = (25R)-3beta-hydroxycholest-5-en-7-one-26-oate + 2 oxidized [adrenodoxin] + H2O. The catalysed reaction is (25R)-3beta,26-dihydroxycholest-5-en-7-one + 2 reduced [adrenodoxin] + O2 + 2 H(+) = (25R)-3beta-hydroxycholest-5-en-7-one-26-al + 2 oxidized [adrenodoxin] + 2 H2O. It carries out the reaction 7-oxocholesterol + 2 reduced [adrenodoxin] + O2 + 2 H(+) = (25R)-3beta,26-dihydroxycholest-5-en-7-one + 2 oxidized [adrenodoxin] + H2O. The enzyme catalyses calciol + 2 reduced [adrenodoxin] + O2 + 2 H(+) = calcidiol + 2 oxidized [adrenodoxin] + H2O. It catalyses the reaction (25R)-5beta-cholestane-3alpha,7alpha,12alpha,26-tetrol + 2 reduced [adrenodoxin] + O2 + 2 H(+) = (25R)-3alpha,7alpha,12alpha-trihydroxy-5beta-cholestan-26-al + 2 oxidized [adrenodoxin] + 2 H2O. The catalysed reaction is 2 reduced [adrenodoxin] + cholesterol + O2 + 2 H(+) = (25R)-cholest-5-ene-3beta,26-diol + 2 oxidized [adrenodoxin] + H2O. It carries out the reaction (25R)-3beta,4beta-dihydroxycholest-5-en-26-al + 2 reduced [adrenodoxin] + O2 + H(+) = (25R)-3beta,4beta-dihydroxycholest-5-en-26-oate + 2 oxidized [adrenodoxin] + H2O. The enzyme catalyses (25R)-4beta,26-dihydroxycholesterol + 2 reduced [adrenodoxin] + O2 + 2 H(+) = (25R)-3beta,4beta-dihydroxycholest-5-en-26-al + 2 oxidized [adrenodoxin] + 2 H2O. It catalyses the reaction 4beta-hydroxycholesterol + 2 reduced [adrenodoxin] + O2 + 2 H(+) = (25R)-4beta,26-dihydroxycholesterol + 2 oxidized [adrenodoxin] + H2O. The catalysed reaction is (25R)-3beta-hydroxy-5-cholesten-26-al + 2 reduced [adrenodoxin] + O2 + H(+) = (25R)-3beta-hydroxy-5-cholestenoate + 2 oxidized [adrenodoxin] + H2O. It carries out the reaction (25R)-cholest-5-ene-3beta,26-diol + 2 reduced [adrenodoxin] + O2 + 2 H(+) = (25R)-3beta-hydroxy-5-cholesten-26-al + 2 oxidized [adrenodoxin] + 2 H2O. The enzyme catalyses (25R)-3alpha,7alpha,12alpha-trihydroxy-5beta-cholestan-26-al + 2 reduced [adrenodoxin] + O2 + H(+) = (25R)-3alpha,7alpha,12alpha-trihydroxy-5beta-cholestan-26-oate + 2 oxidized [adrenodoxin] + H2O. It catalyses the reaction 5beta-cholestane-3alpha,7alpha,12alpha-triol + 2 reduced [adrenodoxin] + O2 + 2 H(+) = (25R)-5beta-cholestane-3alpha,7alpha,12alpha,26-tetrol + 2 oxidized [adrenodoxin] + H2O. It participates in hormone biosynthesis; cholecalciferol biosynthesis. The protein operates within steroid metabolism; cholesterol degradation. Its pathway is lipid metabolism; bile acid biosynthesis. Its function is as follows. Cytochrome P450 monooxygenase that catalyzes regio- and stereospecific hydroxylation of cholesterol and its derivatives. Hydroxylates (with R stereochemistry) the terminal methyl group of cholesterol side-chain in a three step reaction to yield at first a C26 alcohol, then a C26 aldehyde and finally a C26 acid. Regulates cholesterol homeostasis by catalyzing the conversion of excess cholesterol to bile acids via both the 'neutral' (classic) and the 'acid' (alternative) pathways. May also regulate cholesterol homeostasis via generation of active oxysterols, which act as ligands for NR1H2 and NR1H3 nuclear receptors, modulating the transcription of genes involved in lipid metabolism. Plays a role in cholestanol metabolism in the cerebellum. Similarly to cholesterol, hydroxylates cholestanol and may facilitate sterol diffusion through the blood-brain barrier to the systemic circulation for further degradation. Also hydroxylates retinal 7-ketocholesterol, a noxious oxysterol with pro-inflammatory and pro-apoptotic effects, and may play a role in its elimination from the retinal pigment epithelium. May play a redundant role in vitamin D biosynthesis. Catalyzes 25-hydroxylation of vitamin D3 that is required for its conversion to a functionally active form. The protein is Sterol 26-hydroxylase, mitochondrial (Cyp27a1) of Rattus norvegicus (Rat).